The chain runs to 296 residues: Probable AP endonuclease (296 aa).

A disulfide bond links cysteine 16 and cysteine 20. Positions 78, 115, 142, 182, 218, 231, 233, and 271 each coordinate Zn(2+).

Belongs to the AP endonuclease 2 family. It depends on Zn(2+) as a cofactor.

The protein localises to the host nucleus. The protein resides in the host cytoplasm. It localises to the virion. In terms of biological role, endonuclease of the viral base excision repair system that catalyzes DNA cleavage reaction at the apurinic or apyrimidinic sites (AP sites). Cleaves phosphodiester bonds on the 5' side of AP sites. In addition to endonuclease activity, the AP endonuclease has a proofreading 3'-5' exonuclease activity that is considerably more efficient in the elimination of a mismatch than in that of a correctly paired base. Displays 3'-phosphatase and 3'-repair diesterase activities. The single nucleotide gaps generated by the AP endonuclease are filled by the viral repair DNA polymerase X and the DNA ligase. The sequence is that of Probable AP endonuclease from Ornithodoros (relapsing fever ticks).